A 543-amino-acid polypeptide reads, in one-letter code: Bifunctional riboflavin biosynthesis protein RIBA 1, chloroplastic (543 aa).

The N-terminal 56 residues, 1 to 56, are a transit peptide targeting the chloroplast; the sequence is MSSINLSSSSPSTISLSRSRLSQSSTTLLHGLHRVTLPSNHPLSTFSIKTNTGKVK. Positions 57-328 are DHBP synthase; sequence AAVISREDDL…IADLIRYRRK (272 aa). D-ribulose 5-phosphate-binding positions include 152–153, aspartate 157, 267–271, and glutamate 291; these read RE and RAGHT. Residue glutamate 153 participates in Mg(2+) binding. Histidine 270 lines the Mg(2+) pocket. Residues 329–543 form a GTP cyclohydrolase II region; that stretch reads RDKLVERASA…VEKIESESES (215 aa). GTP is bound at residue 379–383; that stretch reads RVHSE. Residues cysteine 384, cysteine 395, and cysteine 397 each contribute to the Zn(2+) site. Residues glutamine 400, 423-425, and threonine 445 contribute to the GTP site; that span reads EGR. Residue aspartate 457 is the Proton acceptor; for GTP cyclohydrolase activity of the active site. The active-site Nucleophile; for GTP cyclohydrolase activity is the arginine 459. Residues threonine 480 and lysine 485 each coordinate GTP.

This sequence in the N-terminal section; belongs to the DHBP synthase family. In the C-terminal section; belongs to the GTP cyclohydrolase II family. Mg(2+) serves as cofactor. Mn(2+) is required as a cofactor. It depends on Zn(2+) as a cofactor. Expressed in leaves, shoots, roots, flowers and siliques.

The protein resides in the plastid. It localises to the chloroplast. The catalysed reaction is D-ribulose 5-phosphate = (2S)-2-hydroxy-3-oxobutyl phosphate + formate + H(+). It carries out the reaction GTP + 4 H2O = 2,5-diamino-6-hydroxy-4-(5-phosphoribosylamino)-pyrimidine + formate + 2 phosphate + 3 H(+). Its pathway is cofactor biosynthesis; riboflavin biosynthesis; 2-hydroxy-3-oxobutyl phosphate from D-ribulose 5-phosphate: step 1/1. The protein operates within cofactor biosynthesis; riboflavin biosynthesis; 5-amino-6-(D-ribitylamino)uracil from GTP: step 1/4. Its function is as follows. Involved in riboflavin biosynthesis. Catalyzes both the conversion of D-ribulose 5-phosphate to formate and 3,4-dihydroxy-2-butanone 4-phosphate and the conversion of GTP to 2,5-diamino-6-ribosylamino-4(3H)-pyrimidinone 5'-phosphate (DARP), formate and pyrophosphate. RIBA2 and RIBA3 together are not able to complement the loss of function of RIBA1. This Arabidopsis thaliana (Mouse-ear cress) protein is Bifunctional riboflavin biosynthesis protein RIBA 1, chloroplastic (RIBA1).